Reading from the N-terminus, the 320-residue chain is Tetraacyldisaccharide 4'-kinase (320 aa).

53–60 is an ATP binding site; that stretch reads SVGGNGKT.

It belongs to the LpxK family.

The catalysed reaction is a lipid A disaccharide + ATP = a lipid IVA + ADP + H(+). Its pathway is glycolipid biosynthesis; lipid IV(A) biosynthesis; lipid IV(A) from (3R)-3-hydroxytetradecanoyl-[acyl-carrier-protein] and UDP-N-acetyl-alpha-D-glucosamine: step 6/6. Transfers the gamma-phosphate of ATP to the 4'-position of a tetraacyldisaccharide 1-phosphate intermediate (termed DS-1-P) to form tetraacyldisaccharide 1,4'-bis-phosphate (lipid IVA). The chain is Tetraacyldisaccharide 4'-kinase from Psychromonas ingrahamii (strain DSM 17664 / CCUG 51855 / 37).